Here is a 184-residue protein sequence, read N- to C-terminus: CASP-like protein 1U2 (184 aa).

The Cytoplasmic portion of the chain corresponds to 1-16 (MSYGCQVSDDEPNGSK). A helical membrane pass occupies residues 17–37 (AVSLLLRLSTLALALTSAVVM). Residues 38–62 (ATASECTVVQLNGVVATITYKDFPP) lie on the Extracellular side of the membrane. The helical transmembrane segment at 63–83 (FVYLVGFNIAAAMLEAAAIYL) threads the bilayer. At 84–100 (RLSTGGGDDDDEGFKGK) the chain is on the cytoplasmic side. A helical transmembrane segment spans residues 101–121 (LPGILLVVIDVAVQALVYTAT). Topologically, residues 122–153 (GGAFAAVSAYGPQINACGAGAGRFCGQVHQSK) are extracellular. Residues 154 to 174 (LLSFAGSAAVGLAVVFRDVSL) traverse the membrane as a helical segment. Topologically, residues 175–184 (PFSLWPTSSD) are cytoplasmic.

It belongs to the Casparian strip membrane proteins (CASP) family. In terms of assembly, homodimer and heterodimers.

The protein localises to the cell membrane. This chain is CASP-like protein 1U2, found in Oryza sativa subsp. japonica (Rice).